Here is a 437-residue protein sequence, read N- to C-terminus: Septin-7 (437 aa).

Ser-2 is subject to N-acetylserine. The residue at position 30 (Tyr-30) is a Phosphotyrosine. The Septin-type G domain maps to Arg-47–Ala-316. Positions Arg-47–Val-317 are interaction with SEPTIN12. A G1 motif region spans residues Gly-57–Ser-64. Gly-57–Ser-64 contributes to the GTP binding site. The residue at position 77 (Ser-77) is a Phosphoserine. GTP contacts are provided by residues Thr-90, Gly-116, and Lys-195–Glu-203. Residues Asp-113 to Gly-116 form a G3 motif region. Positions Ala-194–Asp-197 are G4 motif. At Thr-228 the chain carries Phosphothreonine. GTP contacts are provided by Gly-250 and Arg-265. A coiled-coil region spans residues Thr-332–Lys-433. Position 334 is a phosphoserine (Ser-334). Position 373 is an N6-acetyllysine (Lys-373). The span at Glu-378–Asn-410 shows a compositional bias: basic and acidic residues. Positions Glu-378–Phe-437 are disordered. Ser-424 is subject to Phosphoserine. Position 426 is a phosphothreonine (Thr-426).

The protein belongs to the TRAFAC class TrmE-Era-EngA-EngB-Septin-like GTPase superfamily. Septin GTPase family. In terms of assembly, septins polymerize into heterooligomeric protein complexes that form filaments, and associate with cellular membranes, actin filaments and microtubules. GTPase activity is required for filament formation. Filaments are assembled from asymmetrical heterotrimers, composed of SEPTIN2, SEPTIN6 and SEPTIN7 that associate head-to-head to form a hexameric unit. Within the trimer, directly interacts with SEPTIN6, while interaction with SEPTIN2 seems indirect. In the absence of SEPTIN6, forms homodimers. Interacts directly with CENPE and links CENPE to septin filaments composed of SEPTIN2, SEPTIN6 and SEPTIN7. Interacts with SEPTIN5, SEPTIN8, SEPTIN9 and SEPTIN11. Component of a septin core octameric complex consisting of SEPTIN12, SEPTIN7, SEPTIN6 and SEPTIN2 or SEPTIN4 in the order 12-7-6-2-2-6-7-12 or 12-7-6-4-4-6-7-12 and located in the sperm annulus; the SEPTIN12:SEPTIN7 association is mediated by the respective GTP-binding domains.

It localises to the cytoplasm. Its subcellular location is the chromosome. The protein localises to the centromere. The protein resides in the kinetochore. It is found in the cytoskeleton. It localises to the spindle. Its subcellular location is the cleavage furrow. The protein localises to the midbody. The protein resides in the cilium axoneme. It is found in the cell projection. It localises to the cilium. Its subcellular location is the flagellum. Its function is as follows. Filament-forming cytoskeletal GTPase. Required for normal organization of the actin cytoskeleton. Required for normal progress through mitosis. Involved in cytokinesis. Required for normal association of CENPE with the kinetochore. Plays a role in ciliogenesis and collective cell movements. Forms a filamentous structure with SEPTIN12, SEPTIN6, SEPTIN2 and probably SEPTIN4 at the sperm annulus which is required for the structural integrity and motility of the sperm tail during postmeiotic differentiation. This chain is Septin-7, found in Bos taurus (Bovine).